A 384-amino-acid polypeptide reads, in one-letter code: tRNA-specific 2-thiouridylase MnmA (384 aa).

ATP is bound by residues 13-20 (GLSGGVDS) and methionine 39. An interaction with target base in tRNA region spans residues 99–101 (NPD). Cysteine 104 functions as the Nucleophile in the catalytic mechanism. A disulfide bridge connects residues cysteine 104 and cysteine 215. An ATP-binding site is contributed by glycine 128. An interaction with tRNA region spans residues 165-167 (KDQ). Residue cysteine 215 is the Cysteine persulfide intermediate of the active site. The segment at 333–334 (RY) is interaction with tRNA.

It belongs to the MnmA/TRMU family.

Its subcellular location is the cytoplasm. The enzyme catalyses S-sulfanyl-L-cysteinyl-[protein] + uridine(34) in tRNA + AH2 + ATP = 2-thiouridine(34) in tRNA + L-cysteinyl-[protein] + A + AMP + diphosphate + H(+). Catalyzes the 2-thiolation of uridine at the wobble position (U34) of tRNA, leading to the formation of s(2)U34. The polypeptide is tRNA-specific 2-thiouridylase MnmA (Albidiferax ferrireducens (strain ATCC BAA-621 / DSM 15236 / T118) (Rhodoferax ferrireducens)).